A 190-amino-acid polypeptide reads, in one-letter code: Peptidoglycan recognition protein 1 (190 aa).

A signal peptide spans 1 to 21; the sequence is MSRRYTPLAWVLLALLGLGAA. The residue at position 22 (Q22) is a Pyrrolidone carboxylic acid. Intrachain disulfides connect C24–C148, C40–C85, and C61–C67. The region spanning 46 to 174 is the N-acetylmuramoyl-L-alanine amidase domain; it reads QPVRYVVVSH…RDVQQTLSPG (129 aa).

It belongs to the N-acetylmuramoyl-L-alanine amidase 2 family. Homodimer; disulfide-linked.

Its subcellular location is the secreted. It localises to the cytoplasmic granule. In terms of biological role, innate immunity protein that plays several important functions in antimicrobial and antitumor defense systems. Acts as a pattern receptor that binds to murein peptidoglycans (PGN) of Gram-positive bacteria and thus provides bactericidal activity. Forms an equimolar complex with heat shock protein HSPA1A and induces programmed cell death through apoptosis and necroptosis in tumor cell lines by activating the TNFR1 receptor on the target cell membrane. In addition, acts in complex with the Ca(2+)-binding protein S100A4 as a chemoattractant able to induce lymphocyte movement. Mechanistically, this complex acts as a ligand of the chemotactic receptors CCR5 and CXCR3 which are present on the cells of the immune system. Promotes also the activation of lymphocytes that become able to kill virus-infected cells as well as tumor cells by modulating the spectrum of their target-cell specificity. Induction of cytotoxicity on monocyte surface requires interaction with TREM1 receptor. The polypeptide is Peptidoglycan recognition protein 1 (PGLYRP1) (Bos indicus (Zebu)).